Here is a 400-residue protein sequence, read N- to C-terminus: Glycerol-3-phosphate dehydrogenase [NAD(+)] 1 (400 aa).

NAD(+) is bound by residues 50–55 (GSGNWG), Phe-138, Lys-161, and Ala-194. Lys-161 provides a ligand contact to substrate. Lys-254 serves as the catalytic Proton acceptor. The NAD(+) site is built by Arg-319 and Gln-348. 319 to 320 (RN) contributes to the substrate binding site.

This sequence belongs to the NAD-dependent glycerol-3-phosphate dehydrogenase family.

The catalysed reaction is sn-glycerol 3-phosphate + NAD(+) = dihydroxyacetone phosphate + NADH + H(+). This is Glycerol-3-phosphate dehydrogenase [NAD(+)] 1 (GPD1) from Candida glabrata (strain ATCC 2001 / BCRC 20586 / JCM 3761 / NBRC 0622 / NRRL Y-65 / CBS 138) (Yeast).